A 596-amino-acid chain; its full sequence is Leucine-rich repeat and IQ domain-containing protein 4 (596 aa).

LRR repeat units lie at residues 22-44 (LPRL…LLRQ), 59-83 (LTDR…ILAL), 84-106 (KELE…IQQL), 108-129 (NTKV…LGAL), 130-152 (SSLE…VVSR), 153-176 (LRTL…ICKS), 177-200 (LHHL…IVNQ), 202-223 (KLRE…LCVL), 224-246 (YNLE…IGHL), 248-269 (RLQK…LSQC), 270-293 (SKLS…ELLT), 295-315 (LTEV…LCSW), 317-337 (SLHL…SFKR), 338-361 (LINL…ICAL), 362-384 (KNLE…ISLL), 385-407 (SNLK…IFSL), 410-433 (LEKL…IKRL), 434-457 (MNLK…GLMP), 459-479 (LEVL…ICRT), 480-502 (RNLR…LDHL), 504-525 (NLKV…VCNQ), and 527-549 (NEAI…TIQA). The 30-residue stretch at 540–569 (RKMMATTIQAWWRGIMVRKGYGSYEELLKA) folds into the IQ domain. Residues 569-587 (ARKKGKSPPKDKKGKKAAK) are compositionally biased toward basic residues. The tract at residues 569–596 (ARKKGKSPPKDKKGKKAAKGKPEKGNKK) is disordered.

The chain is Leucine-rich repeat and IQ domain-containing protein 4 (Lrriq4) from Mus musculus (Mouse).